Here is a 216-residue protein sequence, read N- to C-terminus: Probable GH family 25 lysozyme 5 (216 aa).

The signal sequence occupies residues 1 to 20; the sequence is MRFIISLLFVFTLIFNLAFS. The 196-residue stretch at 21 to 216 folds into the Ch-type lysozyme domain; it reads HIGIDVSSGT…GLGIDKNYWE (196 aa). D25 is a catalytic residue. N31 is a glycosylation site (N-linked (GlcNAc...) asparagine). Catalysis depends on residues D113 and E115.

This sequence belongs to the glycosyl hydrolase 25 family.

It is found in the secreted. It carries out the reaction Hydrolysis of (1-&gt;4)-beta-linkages between N-acetylmuramic acid and N-acetyl-D-glucosamine residues in a peptidoglycan and between N-acetyl-D-glucosamine residues in chitodextrins.. This is Probable GH family 25 lysozyme 5 from Dictyostelium discoideum (Social amoeba).